The primary structure comprises 849 residues: Probable receptor-like protein kinase At1g30570 (849 aa).

The first 28 residues, 1–28, serve as a signal peptide directing secretion; sequence MSKLRKKYLEHLLCVLIFFTYVIGYGEA. Topologically, residues 29-429 are extracellular; that stretch reads QSKSFLVDCG…GHSVSDSKMR (401 aa). N40, N57, N94, N122, N158, N268, N271, N305, and N343 each carry an N-linked (GlcNAc...) asparagine glycan. Residues 430 to 450 traverse the membrane as a helical segment; the sequence is IIWISVGAGIAIIIFFVFLGI. Over 451–849 the chain is Cytoplasmic; the sequence is LVVCLCKKRR…QTGSALHNSA (399 aa). Residues 520–793 form the Protein kinase domain; the sequence is FDDGLAIGVG…GEVLWSLEYV (274 aa). Residues 526–534 and K548 contribute to the ATP site; that span reads IGVGGFGKV. The active-site Proton acceptor is the D644. Residues 810-849 are disordered; it reads FSSSQAVEEAPESFTLPACSNQDSSETEQSQTGSALHNSA. Over residues 827-849 the composition is skewed to polar residues; it reads ACSNQDSSETEQSQTGSALHNSA.

The protein belongs to the protein kinase superfamily. Ser/Thr protein kinase family.

The protein resides in the cell membrane. The protein is Probable receptor-like protein kinase At1g30570 of Arabidopsis thaliana (Mouse-ear cress).